Reading from the N-terminus, the 729-residue chain is Polyphosphate kinase (729 aa).

The tract at residues Met-1–Pro-46 is disordered. Low complexity predominate over residues Thr-25–Ala-42. Asn-90 contributes to the ATP binding site. The Mg(2+) site is built by Arg-422 and Arg-452. Residue His-482 is the Phosphohistidine intermediate of the active site. Residues Tyr-515, Arg-611, and His-639 each coordinate ATP.

It belongs to the polyphosphate kinase 1 (PPK1) family. Mg(2+) serves as cofactor. An intermediate of this reaction is the autophosphorylated ppk in which a phosphate is covalently linked to a histidine residue through a N-P bond.

The enzyme catalyses [phosphate](n) + ATP = [phosphate](n+1) + ADP. Its function is as follows. Catalyzes the reversible transfer of the terminal phosphate of ATP to form a long-chain polyphosphate (polyP). The chain is Polyphosphate kinase from Mycolicibacterium gilvum (strain PYR-GCK) (Mycobacterium gilvum (strain PYR-GCK)).